Reading from the N-terminus, the 137-residue chain is Small ribosomal subunit protein uS19 (137 aa).

Belongs to the universal ribosomal protein uS19 family.

Protein S19 forms a complex with S13 that binds strongly to the 16S ribosomal RNA. The protein is Small ribosomal subunit protein uS19 of Methanoculleus marisnigri (strain ATCC 35101 / DSM 1498 / JR1).